Here is a 474-residue protein sequence, read N- to C-terminus: SHC-transforming protein 3 (474 aa).

The interval 1 to 27 (MSATRKSRAGDEPLPRPPRGAPHTSDQ) is disordered. The PID domain occupies 29 to 214 (LGPGVTYVVK…LDEPWTEEEG (186 aa)). The CH1 stretch occupies residues 215 to 378 (DGPDHPYYNS…RMLEELNAEP (164 aa)). Position 282 is a phosphoserine (Ser-282). Residues 308 to 328 (QPVPPQVWPAATSSTESSPRK) are disordered. Residues 379-470 (WYQGEMSRKE…GSELCLQQPV (92 aa)) enclose the SH2 domain.

Interacts with the Trk receptors in a phosphotyrosine-dependent manner. Once activated, binds to GRB2. Interacts with activated EGF receptors. Post-translationally, tyrosine phosphorylated. As to expression, predominantly expressed in the adult brain.

Functionally, signaling adapter that couples activated growth factor receptors to signaling pathway in neurons. Involved in the signal transduction pathways of neurotrophin-activated Trk receptors in cortical neurons. The chain is SHC-transforming protein 3 (Shc3) from Mus musculus (Mouse).